Consider the following 256-residue polypeptide: uncharacterized protein (256 aa).

Residues 16–83 (VRLQKILSRA…DSLVYLALNK (68 aa)) enclose the S4 RNA-binding domain. The active-site Nucleophile is D121.

This sequence belongs to the pseudouridine synthase RsuA family.

The enzyme catalyses a uridine in RNA = a pseudouridine in RNA. This is an uncharacterized protein from Mycobacterium leprae (strain TN).